Consider the following 459-residue polypeptide: Trigger factor (459 aa).

The PPIase FKBP-type domain occupies 166 to 245 (GDFANIDLTA…VNSVKAEELP (80 aa)).

It belongs to the FKBP-type PPIase family. Tig subfamily.

It is found in the cytoplasm. The enzyme catalyses [protein]-peptidylproline (omega=180) = [protein]-peptidylproline (omega=0). In terms of biological role, involved in protein export. Acts as a chaperone by maintaining the newly synthesized protein in an open conformation. Functions as a peptidyl-prolyl cis-trans isomerase. The chain is Trigger factor from Bifidobacterium longum (strain NCC 2705).